A 211-amino-acid chain; its full sequence is Ribonuclease MRP protein subunit rmp1 (211 aa).

A helical transmembrane segment spans residues 73–93 (PALGLVLLGILARVWFVMGGI). S156 is modified (phosphoserine). The interval 178 to 211 (SQGTKRKSKNSNSTVKKKKKRARKGRDEIDDIFG) is disordered. The span at 181-201 (TKRKSKNSNSTVKKKKKRARK) shows a compositional bias: basic residues.

As to quaternary structure, component of RNase MRP complex which consists of an RNA moiety and at least 10 protein subunits.

The protein localises to the membrane. It is found in the nucleus. It localises to the nucleolus. Functions as part of ribonuclease MRP (RNase MRP), which is involved in rRNA processing in mitochondria. This is Ribonuclease MRP protein subunit rmp1 from Schizosaccharomyces pombe (strain 972 / ATCC 24843) (Fission yeast).